The chain runs to 563 residues: Kelch repeat and BTB domain-containing protein 1 (563 aa).

The 68-residue stretch at 21-88 folds into the BTB domain; it reads CDINIVINDE…IYGIPLSLTN (68 aa). Positions 123–219 constitute a BACK domain; the sequence is CIDFYIYADK…SLLSPQVIKS (97 aa). Kelch repeat units lie at residues 252–297, 298–346, 347–395, 397–441, 442–492, and 494–538; these read IELI…VLDN, IIYM…ADDE, YIYC…MLNG, IYVI…VHAG, KIYI…SAHN, and LYVG…CEPI.

In terms of assembly, interacts (via BTB domain) with host CUL3.

It localises to the host cytoplasm. Its function is as follows. Probable substrate-specific adapter of CUL3-containing E3 ubiquitin-protein ligases which mediate the ubiquitination and subsequent proteasomal degradation of host target proteins. This Cowpox virus (strain Brighton Red) (CPV) protein is Kelch repeat and BTB domain-containing protein 1 (KBTB1).